We begin with the raw amino-acid sequence, 83 residues long: Large ribosomal subunit protein bL31B (83 aa).

Belongs to the bacterial ribosomal protein bL31 family. Type B subfamily. Part of the 50S ribosomal subunit.

In Bacteroides fragilis (strain ATCC 25285 / DSM 2151 / CCUG 4856 / JCM 11019 / LMG 10263 / NCTC 9343 / Onslow / VPI 2553 / EN-2), this protein is Large ribosomal subunit protein bL31B.